The following is a 754-amino-acid chain: Glutathione biosynthesis bifunctional protein GshAB (754 aa).

The glutamate--cysteine ligase stretch occupies residues 1-332 (MTLNQLLQKL…QGHALNEKIA (332 aa)). An ATP-grasp domain is found at 488-746 (KKILADASFP…ITTKILDKLF (259 aa)). 515-573 (PLIKDKQIVVKPKSTNFGLGISIFQEPASLDNYQKALEIAFAEDTSVLVEEFIPGTEYR) is a binding site for ATP. Mg(2+) contacts are provided by D695, E716, and N718. Residues D695, E716, and N718 each contribute to the Mn(2+) site.

It in the N-terminal section; belongs to the glutamate--cysteine ligase type 1 family. Type 2 subfamily. As to quaternary structure, monomer. It depends on Mg(2+) as a cofactor. Requires Mn(2+) as cofactor.

The catalysed reaction is L-cysteine + L-glutamate + ATP = gamma-L-glutamyl-L-cysteine + ADP + phosphate + H(+). It carries out the reaction gamma-L-glutamyl-L-cysteine + glycine + ATP = glutathione + ADP + phosphate + H(+). The protein operates within sulfur metabolism; glutathione biosynthesis; glutathione from L-cysteine and L-glutamate: step 1/2. It participates in sulfur metabolism; glutathione biosynthesis; glutathione from L-cysteine and L-glutamate: step 2/2. Functionally, synthesizes glutathione from L-glutamate and L-cysteine via gamma-L-glutamyl-L-cysteine. This chain is Glutathione biosynthesis bifunctional protein GshAB, found in Streptococcus thermophilus (strain ATCC BAA-250 / LMG 18311).